A 247-amino-acid chain; its full sequence is NAD-dependent protein deacetylase (247 aa).

The region spanning 1-247 (MDTRKNLKEL…LGGIVEELGY (247 aa)) is the Deacetylase sirtuin-type domain. NAD(+) is bound by residues Ala23, Thr27, Phe34, Arg35, Gln104, Ile106, Asp107, and His122. Phe34 contacts nicotinamide. 2 residues coordinate nicotinamide: Ile106 and Asp107. His122 functions as the Proton acceptor in the catalytic mechanism. Residues Cys130, Cys133, Cys152, and Cys155 each contribute to the Zn(2+) site. Residues Thr193, Ser194, Asn216, and Ile234 each coordinate NAD(+).

It belongs to the sirtuin family. Class U subfamily. The cofactor is Zn(2+).

It localises to the cytoplasm. It catalyses the reaction N(6)-acetyl-L-lysyl-[protein] + NAD(+) + H2O = 2''-O-acetyl-ADP-D-ribose + nicotinamide + L-lysyl-[protein]. In terms of biological role, NAD-dependent protein deacetylase which modulates the activities of several enzymes which are inactive in their acetylated form. The polypeptide is NAD-dependent protein deacetylase (Clostridium tetani (strain Massachusetts / E88)).